The following is a 563-amino-acid chain: MSEELVPHPNESLPGPRASPREVWKKGGRLLSVLLAVNVLLLACTLISGGAFNKVAVYDTDVFALLTTMMLLAALWIVFYLLRTARCPDAVPYRDAHAGPIWLRGGLVLFGICTLVMDVFKTGYYSSFFECQSAIKILHPIIQAVFVIVQTYFLWISAKDCIHTHLDLTRCGLMFTLATNLAIWMAAVVDESVHQAHSYSGSHGNTSHTRLNPDSKRAGGAAEEDPCLCSTAICQIFQQGYFYLYPFNIEYSLFASTMLYVMWKNVGRLLASTHGHGHTPSRVSLFRETFFAGPVLGLLLFVVGLAVFILYEVQVSGERGHTRQALVIYYSFNIVCLGLMTLVSLSGSVIYRFDRRAMDHHKNPTRTLDVALLMGAALGQYAISYYSIVAVVVGSPRDLQGALNLSHALLMIAQHTFQNVFIIESLHRGPPGAEPREMPPKEPCQGITFANLDAIRTLPSCPPTPRLVIPNLESPQEAVAIISAPRCHWRRRCLKDISLFLLLCNVILWIMPAFGARPHFSNTVEVDFYGYSLWAAIVNICLPFGIFYRMHAVSSLLEVYVLS.

The segment at 1–20 (MSEELVPHPNESLPGPRASP) is disordered. Helical transmembrane passes span 30 to 50 (LLSVLLAVNVLLLACTLISGG), 62 to 82 (VFALLTTMMLLAALWIVFYLL), 100 to 120 (PIWLRGGLVLFGICTLVMDVF), 137 to 157 (ILHPIIQAVFVIVQTYFLWIS), 173 to 193 (LMFTLATNLAIWMAAVVDESV), 242 to 262 (FYLYPFNIEYSLFASTMLYVM), 290 to 310 (FFAGPVLGLLLFVVGLAVFIL), 325 to 345 (ALVIYYSFNIVCLGLMTLVSL), 373 to 393 (LMGAALGQYAISYYSIVAVVV), 403 to 423 (LNLSHALLMIAQHTFQNVFII), 496 to 516 (DISLFLLLCNVILWIMPAFGA), and 528 to 548 (FYGYSLWAAIVNICLPFGIFY).

It belongs to the otopetrin family. As to expression, expressed at higher level in stomach, testis and olfactory bulb.

It is found in the cell membrane. It carries out the reaction H(+)(in) = H(+)(out). With respect to regulation, actives at neutral and alkaline extracellular pH, acid extracellular pH appears to inhibit the channel. Insensitive to activation by Zn(2+). Its function is as follows. Proton-selective ion channel open at neutral pH. Actives at neutral and alkaline extracellular pH, likely participates in some alkali-related physiological activities. The chain is Proton channel OTOP2 from Mus musculus (Mouse).